The primary structure comprises 445 residues: 23S rRNA (uracil(1939)-C(5))-methyltransferase RlmD (445 aa).

Residues 1–21 (MARRRKQLPETPEPASIETLS) form a disordered region. The TRAM domain occupies 5–64 (RKQLPETPEPASIETLSHDGRGIARRDGKTTFIDNALPGEEVMFKFTYMRRKFDEGKAVE). Positions 77, 83, 86, and 165 each coordinate [4Fe-4S] cluster. Residues Gln-275, Phe-304, Asn-309, Glu-325, Asp-352, and Asp-373 each coordinate S-adenosyl-L-methionine. Catalysis depends on Cys-399, which acts as the Nucleophile.

The protein belongs to the class I-like SAM-binding methyltransferase superfamily. RNA M5U methyltransferase family. RlmD subfamily.

The enzyme catalyses uridine(1939) in 23S rRNA + S-adenosyl-L-methionine = 5-methyluridine(1939) in 23S rRNA + S-adenosyl-L-homocysteine + H(+). Catalyzes the formation of 5-methyl-uridine at position 1939 (m5U1939) in 23S rRNA. This Alcanivorax borkumensis (strain ATCC 700651 / DSM 11573 / NCIMB 13689 / SK2) protein is 23S rRNA (uracil(1939)-C(5))-methyltransferase RlmD.